The sequence spans 76 residues: Defensin-like protein 122 (76 aa).

Residues 1–25 (MSKTTVIAIFMVVLVLGLVTKETQG) form the signal peptide. Disulfide bonds link C29–C74, C39–C60, C44–C68, and C48–C70.

It belongs to the DEFL family. As to expression, expressed in flower buds, but not in stems, roots or rosette leaves.

The protein localises to the secreted. In Arabidopsis thaliana (Mouse-ear cress), this protein is Defensin-like protein 122 (LCR30).